The primary structure comprises 994 residues: Alanine--tRNA ligase, chloroplastic/mitochondrial (994 aa).

A disordered region spans residues 1–29 (MGGLKLPPQTLHGIHGGRRPLTAPSSKPS). The Zn(2+) site is built by H672, H676, C774, and H778.

The protein belongs to the class-II aminoacyl-tRNA synthetase family. Monomer. It depends on Zn(2+) as a cofactor.

It is found in the plastid. Its subcellular location is the chloroplast. It localises to the mitochondrion. It carries out the reaction tRNA(Ala) + L-alanine + ATP = L-alanyl-tRNA(Ala) + AMP + diphosphate. Its function is as follows. Catalyzes the attachment of alanine to tRNA(Ala) in a two-step reaction: alanine is first activated by ATP to form Ala-AMP and then transferred to the acceptor end of tRNA(Ala). Also edits incorrectly charged tRNA(Ala) via its editing domain. The protein is Alanine--tRNA ligase, chloroplastic/mitochondrial of Populus trichocarpa (Western balsam poplar).